The chain runs to 346 residues: GTPase Obg (346 aa).

The region spanning 1–159 (MQFVDEANIR…RNLGLELSVL (159 aa)) is the Obg domain. Residues 127 to 149 (NVHFKSSTNRTPRQCTPGEPGDE) are disordered. Over residues 130-140 (FKSSTNRTPRQ) the composition is skewed to polar residues. Residues 160 to 333 (ADVGLLGMPN…LVKEVAYGLE (174 aa)) form the OBG-type G domain. GTP-binding positions include 166-173 (GMPNAGKS), 191-195 (FTTLY), 213-216 (DIPG), 283-286 (NKTD), and 314-316 (SAV). Ser-173 and Thr-193 together coordinate Mg(2+).

This sequence belongs to the TRAFAC class OBG-HflX-like GTPase superfamily. OBG GTPase family. Monomer. The cofactor is Mg(2+).

The protein localises to the cytoplasm. An essential GTPase which binds GTP, GDP and possibly (p)ppGpp with moderate affinity, with high nucleotide exchange rates and a fairly low GTP hydrolysis rate. Plays a role in control of the cell cycle, stress response, ribosome biogenesis and in those bacteria that undergo differentiation, in morphogenesis control. The chain is GTPase Obg from Hydrogenovibrio crunogenus (strain DSM 25203 / XCL-2) (Thiomicrospira crunogena).